The chain runs to 123 residues: Small ribosomal subunit protein uS12 (123 aa).

Asp-89 is modified (3-methylthioaspartic acid).

This sequence belongs to the universal ribosomal protein uS12 family. In terms of assembly, part of the 30S ribosomal subunit. Contacts proteins S8 and S17. May interact with IF1 in the 30S initiation complex.

Functionally, with S4 and S5 plays an important role in translational accuracy. Its function is as follows. Interacts with and stabilizes bases of the 16S rRNA that are involved in tRNA selection in the A site and with the mRNA backbone. Located at the interface of the 30S and 50S subunits, it traverses the body of the 30S subunit contacting proteins on the other side and probably holding the rRNA structure together. The combined cluster of proteins S8, S12 and S17 appears to hold together the shoulder and platform of the 30S subunit. In Bartonella tribocorum (strain CIP 105476 / IBS 506), this protein is Small ribosomal subunit protein uS12.